The sequence spans 332 residues: Phenol 2-monooxygenase, oxygenase component MhpL (332 aa).

It belongs to the TmoE/XamoE family.

It carries out the reaction phenol + NADH + O2 + H(+) = catechol + NAD(+) + H2O. It functions in the pathway aromatic compound metabolism; phenol degradation. Part of a multicomponent enzyme which catalyzes the degradation of phenol and some of its methylated derivatives. The sequence is that of Phenol 2-monooxygenase, oxygenase component MhpL (mphL) from Acinetobacter pittii (strain PHEA-2).